A 1068-amino-acid chain; its full sequence is MFEDKPHAEGAAVVAAAGEALQALCQELNLDEGSAAEALDDFTAIRGNYSLEGEVTHWLACSLYVACRKSIIPTVGKGIMEGNCVSLTRILRSAKLSLIQFFSKMKKWMDMSNLPQEFRERIERLERNFEVSTVIFKKYEPIFLDIFQNPYEEPPKLPRSRKQRRIPCSVKDLFNFCWTLFVYTKGNFRMIGDDLVNSYHLLLCCLDLIFANAIMCPNRQDLLNPSFKGLPSDFHTADFTASEEPPCIIAVLCELHDGLLVEAKGIKEHYFKPYISKLFDRKILKGECLLDLSSFTDNSKAVNKEYEEYVLTVGDFDERIFLGADAEEEIGTPRKFTRDTPLGKLTAQANVEYNLQQHFEKKRSFAPSTPLTGRRYLREKEAVITPVASATQSVSRLQSIVAGLKNAPSDQLINIFESCVRNPVENIMKILKGIGETFCQHYTQSTDEQPGSHIDFAVNRLKLAEILYYKILETVMVQETRRLHGMDMSVLLEQDIFHRSLMACCLEIVLFAYSSPRTFPWIIEVLNLQPFYFYKVIEVVIRSEEGLSRDMVKHLNSIEEQILESLAWSHDSALWEALQVSANKVPTCEEVIFPNNFETGNGGNVQGHLPLMPMSPLMHPRVKEVRTDSGSLRRDMQPLSPISVHERYSSPTAGSAKRRLFGEDPPKEMLMDKIITEGTKLKIAPSSSITAENVSILPGQTLLTMATAPVTGTTGHKVTIPLHGVANDAGEITLIPLSMNTNQESKVKSPVSLTAHSLIGASPKQTNLTKAQEVHSTGINRPKRTGSLALFYRKVYHLASVRLRDLCLKLDVSNELRRKIWTCFEFTLVHCPDLMKDRHLDQLLLCAFYIMAKVTKEERTFQEIMKSYRNQPQANSHVYRSVLLKSIPREVVAYNKNINDDFEMIDCDLEDATKTPDCSSGPVKEERGDLIKFYNTIYVGRVKSFALKYDLANQDHMMDAPPLSPFPHIKQQPGSPRRISQQHSIYISPHKNGSGLTPRSALLYKFNGSPSKSLKDINNMIRQGEQRTKKRVIAIDSDAESPAKRVCQENDDVLLKRLQDVVSERANH.

A Phosphothreonine; by CDK2 modification is found at Thr-332. Thr-369 is subject to Phosphothreonine; by CDK4. Position 385 is a phosphothreonine; by CDK2 (Thr-385). Residues 385-584 (TPVASATQSV…WEALQVSANK (200 aa)) form a domain A region. The tract at residues 385 to 949 (TPVASATQSV…GRVKSFALKY (565 aa)) is pocket; binds T and E1A. Residues 585–780 (VPTCEEVIFP…AQEVHSTGIN (196 aa)) form a spacer region. Residue Ser-640 is modified to Phosphoserine; by CDK2 and CDK4. Ser-650 and Ser-749 each carry phosphoserine. A Phosphoserine; by CDK2 modification is found at Ser-762. Residues 781–949 (RPKRTGSLAL…GRVKSFALKY (169 aa)) are domain B. Residues Ser-964 and Ser-975 each carry the phosphoserine; by CDK2 and CDK4 modification. Phosphoserine; by CDK2 is present on Ser-988. Position 997 is a phosphothreonine; by CDK2 (Thr-997). Ser-1009 carries the phosphoserine; by CDK2 modification. Ser-1041 carries the post-translational modification Phosphoserine.

This sequence belongs to the retinoblastoma protein (RB) family. Component of the DREAM complex (also named LINC complex) at least composed of E2F4, E2F5, LIN9, LIN37, LIN52, LIN54, MYBL1, MYBL2, RBL1, RBL2, RBBP4, TFDP1 and TFDP2. The complex exists in quiescent cells where it represses cell cycle-dependent genes. It dissociates in S phase when LIN9, LIN37, LIN52 and LIN54 form a subcomplex that binds to MYBL2. Interacts with AATF. Interacts with KDM5A. Interacts with KMT5B and KMT5C. Interacts with USP4. Interacts with RBBP9. As to quaternary structure, (Microbial infection) Interacts with SV40 and JC virus large T antigens. Large T antigen, but not E1A, binds only to the unphosphorylated form. In terms of assembly, (Microbial infection) Interacts with JC virus small t antigen. Cell-cycle arrest properties are inactivated by phosphorylation on Thr-332, Ser-640, Ser-964 and Ser-975 by CDK4.

The protein resides in the nucleus. Key regulator of entry into cell division. Directly involved in heterochromatin formation by maintaining overall chromatin structure and, in particular, that of constitutive heterochromatin by stabilizing histone methylation. Recruits and targets histone methyltransferases KMT5B and KMT5C, leading to epigenetic transcriptional repression. Controls histone H4 'Lys-20' trimethylation. Probably acts as a transcription repressor by recruiting chromatin-modifying enzymes to promoters. Potent inhibitor of E2F-mediated trans-activation. May act as a tumor suppressor. This chain is Retinoblastoma-like protein 1 (RBL1), found in Homo sapiens (Human).